A 126-amino-acid polypeptide reads, in one-letter code: KH homology domain-containing protein 1B (126 aa).

The KH domain occupies 19 to 78 (PLVFDMEEDQEDYIFGPDDEYLHTLEVHSNTLIQLERWFSPTGQTRVTVVGPLKARLWVM).

Belongs to the KHDC1 family.

The protein is KH homology domain-containing protein 1B (Khdc1b) of Mus musculus (Mouse).